Reading from the N-terminus, the 110-residue chain is B3 domain-containing protein LOC_Os02g10420 (110 aa).

Positions 1–104 (MSAMLNENVP…VLSVTVHKAD (104 aa)) form a DNA-binding region, TF-B3.

Its subcellular location is the nucleus. This is B3 domain-containing protein LOC_Os02g10420 from Oryza sativa subsp. japonica (Rice).